A 543-amino-acid chain; its full sequence is Carboxypeptidase Y homolog A (543 aa).

A signal peptide spans 1–17; sequence MKFLTTGLLATAALAAA. Residues 18–124 constitute a propeptide that is removed on maturation; the sequence is QEQQVLQAED…KLHNYDLRVK (107 aa). Disulfide bonds link C179–C419, C313–C327, C337–C360, C344–C353, and C382–C389. The N-linked (GlcNAc...) asparagine glycan is linked to N210. Residue S266 is part of the active site. Residue D458 is part of the active site. N-linked (GlcNAc...) asparagine glycosylation occurs at N509. Residue H520 is part of the active site.

This sequence belongs to the peptidase S10 family.

It is found in the vacuole. The catalysed reaction is Release of a C-terminal amino acid with broad specificity.. Its function is as follows. Vacuolar carboxypeptidase involved in degradation of small peptides. Digests preferentially peptides containing an aliphatic or hydrophobic residue in P1' position, as well as methionine, leucine or phenylalanine in P1 position of ester substrate. The polypeptide is Carboxypeptidase Y homolog A (CPYA) (Trichophyton tonsurans (Scalp ringworm fungus)).